Here is a 666-residue protein sequence, read N- to C-terminus: Enzymatic polyprotein (666 aa).

Asp54 is an active-site residue. The Reverse transcriptase domain maps to 215 to 445 (ENPIDPIKSK…EKINFLGLEI (231 aa)).

The protein belongs to the caulimoviridae enzymatic polyprotein family.

The enzyme catalyses DNA(n) + a 2'-deoxyribonucleoside 5'-triphosphate = DNA(n+1) + diphosphate. Functionally, encodes for at least two polypeptides: protease (PR) and reverse transcriptase (RT). The protease processes the polyprotein in cis. Reverse transcriptase is multifunctional enzyme that converts the viral RNA genome into dsDNA in viral cytoplasmic capsids. This enzyme displays a DNA polymerase activity that can copy either DNA or RNA templates, and a ribonuclease H (RNase H) activity that cleaves the RNA strand of RNA-DNA heteroduplexes in a partially processive 3'- to 5'-endonucleasic mode. Neo-synthesized pregenomic RNA (pgRNA) are encapsidated, and reverse-transcribed inside the nucleocapsid. Partial (+)DNA is synthesized from the (-)DNA template and generates the relaxed circular DNA (RC-DNA) genome. After budding and infection, the RC-DNA migrates in the nucleus, and is converted into a plasmid-like covalently closed circular DNA (cccDNA). This chain is Enzymatic polyprotein, found in Figwort mosaic virus (strain DxS) (FMV).